The following is a 496-amino-acid chain: Probable cytosol aminopeptidase (496 aa).

The Mn(2+) site is built by Lys262 and Asp267. Residue Lys274 is part of the active site. Mn(2+)-binding residues include Asp285, Asp344, and Glu346. Arg348 is a catalytic residue.

It belongs to the peptidase M17 family. Requires Mn(2+) as cofactor.

Its subcellular location is the cytoplasm. The catalysed reaction is Release of an N-terminal amino acid, Xaa-|-Yaa-, in which Xaa is preferably Leu, but may be other amino acids including Pro although not Arg or Lys, and Yaa may be Pro. Amino acid amides and methyl esters are also readily hydrolyzed, but rates on arylamides are exceedingly low.. The enzyme catalyses Release of an N-terminal amino acid, preferentially leucine, but not glutamic or aspartic acids.. Its function is as follows. Presumably involved in the processing and regular turnover of intracellular proteins. Catalyzes the removal of unsubstituted N-terminal amino acids from various peptides. This Rhizobium johnstonii (strain DSM 114642 / LMG 32736 / 3841) (Rhizobium leguminosarum bv. viciae) protein is Probable cytosol aminopeptidase.